A 141-amino-acid chain; its full sequence is LOB domain-containing protein 34 (141 aa).

Positions Asn16–Ile119 constitute an LOB domain.

It belongs to the LOB domain-containing protein family.

This is LOB domain-containing protein 34 (LBD34) from Arabidopsis thaliana (Mouse-ear cress).